The following is a 221-amino-acid chain: Zingipain-2 (221 aa).

2 disulfides stabilise this stretch: cysteine 24/cysteine 65 and cysteine 58/cysteine 98. The active site involves cysteine 27. Residues asparagine 99 and asparagine 156 are each glycosylated (N-linked (GlcNAc...) asparagine). Residues cysteine 155 and cysteine 206 are joined by a disulfide bond. The active site involves histidine 161.

The protein belongs to the peptidase C1 family.

It catalyses the reaction Preferential cleavage of peptides with a proline residue at the P2 position.. Functionally, cysteine proteinase with a specific activity toward peptides with a proline residue at the P2 position. The protein is Zingipain-2 of Zingiber officinale (Ginger).